Consider the following 624-residue polypeptide: LRR receptor kinase BAK1 (624 aa).

Positions 1–25 (MAAPRWAVWAVLLLRLLVPAARVLA) are cleaved as a signal peptide. Topologically, residues 26–237 (NMEGDALHSL…QSPGSSSSTG (212 aa)) are extracellular. LRR repeat units lie at residues 91–115 (LKNL…LGNL), 117–139 (NLVS…LGNL), 140–163 (LKLR…LTAI), and 164–188 (TALQ…SFSL). Residues asparagine 103, asparagine 114, asparagine 127, asparagine 149, and asparagine 175 are each glycosylated (N-linked (GlcNAc...) asparagine). Residues 205–236 (TTKPCPGAPPFSPPPPYNPPTPVQSPGSSSST) form a disordered region. Pro residues predominate over residues 210–227 (PGAPPFSPPPPYNPPTPV). A helical transmembrane segment spans residues 238–258 (AIAGGVAAGAALLFAIPAIGF). Over 259-624 (AWYRRRKPQE…LHAVELSGPR (366 aa)) the chain is Cytoplasmic. A Protein kinase domain is found at 301-588 (FSNKNILGRG…GLAERWEEWQ (288 aa)). ATP-binding positions include 307–315 (LGRGGFGKV) and lysine 329. The active-site Proton acceptor is the aspartate 428.

This sequence belongs to the protein kinase superfamily. Ser/Thr protein kinase family. In terms of assembly, forms homodimers. Interacts with BRI1. Interacts with REM4.1.

The protein localises to the cell membrane. The catalysed reaction is L-seryl-[protein] + ATP = O-phospho-L-seryl-[protein] + ADP + H(+). It carries out the reaction L-threonyl-[protein] + ATP = O-phospho-L-threonyl-[protein] + ADP + H(+). In terms of biological role, LRR receptor kinase involved in defense response. Does not seem to be required specifically for XA21-mediated immunity or basal resistance to Xanthomonas oryzae pv. oryzae (Xoo), or immunity to Magnaporthe oryzae. Involved in brassinosteroid (BR) signaling pathway. Acts as a coreceptor of BRI1. Forms at the plasma membrane a receptor complex with BRI1 which is activated in response to brassinolide. Phosphorylates BRI1. Required for normal plant growth and leaf development. Possesses kinase activity in vitro. The protein is LRR receptor kinase BAK1 of Oryza sativa subsp. indica (Rice).